Consider the following 769-residue polypeptide: 5-methyltetrahydropteroyltriglutamate--homocysteine methyltransferase (769 aa).

Residues 18-21 (RELK) and Lys-127 each bind 5-methyltetrahydropteroyltri-L-glutamate. L-homocysteine contacts are provided by residues 447–449 (IGS) and Glu-500. Residues 447-449 (IGS) and Glu-500 each bind L-methionine. 5-methyltetrahydropteroyltri-L-glutamate contacts are provided by residues 531–532 (RC) and Trp-577. Asp-615 is a binding site for L-homocysteine. Asp-615 contributes to the L-methionine binding site. Residue Glu-621 coordinates 5-methyltetrahydropteroyltri-L-glutamate. Zn(2+) is bound by residues His-657, Cys-659, and Glu-681. Catalysis depends on His-710, which acts as the Proton donor. Cys-742 contributes to the Zn(2+) binding site.

Belongs to the vitamin-B12 independent methionine synthase family. The cofactor is Zn(2+).

It catalyses the reaction 5-methyltetrahydropteroyltri-L-glutamate + L-homocysteine = tetrahydropteroyltri-L-glutamate + L-methionine. It functions in the pathway amino-acid biosynthesis; L-methionine biosynthesis via de novo pathway; L-methionine from L-homocysteine (MetE route): step 1/1. In terms of biological role, catalyzes the transfer of a methyl group from 5-methyltetrahydrofolate to homocysteine resulting in methionine formation. The sequence is that of 5-methyltetrahydropteroyltriglutamate--homocysteine methyltransferase from Chelativorans sp. (strain BNC1).